The sequence spans 376 residues: 23S rRNA (uracil(747)-C(5))-methyltransferase RlmC (376 aa).

[4Fe-4S] cluster is bound by residues C3, C11, C14, and C88. S-adenosyl-L-methionine contacts are provided by Q213, F242, E263, and N308. Residue C335 is the Nucleophile of the active site.

It belongs to the class I-like SAM-binding methyltransferase superfamily. RNA M5U methyltransferase family. RlmC subfamily.

The enzyme catalyses uridine(747) in 23S rRNA + S-adenosyl-L-methionine = 5-methyluridine(747) in 23S rRNA + S-adenosyl-L-homocysteine + H(+). Functionally, catalyzes the formation of 5-methyl-uridine at position 747 (m5U747) in 23S rRNA. The sequence is that of 23S rRNA (uracil(747)-C(5))-methyltransferase RlmC from Vibrio vulnificus (strain CMCP6).